The following is a 326-amino-acid chain: tRNA uridine(34) hydroxylase (326 aa).

The 97-residue stretch at 122-218 folds into the Rhodanese domain; sequence EENRCLVLDV…YGQAVGTGKW (97 aa). Cysteine 178 (cysteine persulfide intermediate) is an active-site residue.

The protein belongs to the TrhO family.

It carries out the reaction uridine(34) in tRNA + AH2 + O2 = 5-hydroxyuridine(34) in tRNA + A + H2O. Functionally, catalyzes oxygen-dependent 5-hydroxyuridine (ho5U) modification at position 34 in tRNAs. This is tRNA uridine(34) hydroxylase from Chlamydia abortus (strain DSM 27085 / S26/3) (Chlamydophila abortus).